Reading from the N-terminus, the 511-residue chain is Phospho-2-dehydro-3-deoxyheptonate aldolase 2, chloroplastic (511 aa).

Belongs to the class-II DAHP synthase family. As to expression, leaves, stems, tuber and roots.

The protein resides in the plastid. Its subcellular location is the chloroplast. It carries out the reaction D-erythrose 4-phosphate + phosphoenolpyruvate + H2O = 7-phospho-2-dehydro-3-deoxy-D-arabino-heptonate + phosphate. Its pathway is metabolic intermediate biosynthesis; chorismate biosynthesis; chorismate from D-erythrose 4-phosphate and phosphoenolpyruvate: step 1/7. The sequence is that of Phospho-2-dehydro-3-deoxyheptonate aldolase 2, chloroplastic (SHKB) from Solanum tuberosum (Potato).